Here is a 293-residue protein sequence, read N- to C-terminus: 4-hydroxy-tetrahydrodipicolinate synthase (293 aa).

Position 45 (threonine 45) interacts with pyruvate. The Proton donor/acceptor role is filled by tyrosine 133. Lysine 161 (schiff-base intermediate with substrate) is an active-site residue. Isoleucine 203 is a pyruvate binding site.

It belongs to the DapA family. In terms of assembly, homotetramer; dimer of dimers.

Its subcellular location is the cytoplasm. The catalysed reaction is L-aspartate 4-semialdehyde + pyruvate = (2S,4S)-4-hydroxy-2,3,4,5-tetrahydrodipicolinate + H2O + H(+). It participates in amino-acid biosynthesis; L-lysine biosynthesis via DAP pathway; (S)-tetrahydrodipicolinate from L-aspartate: step 3/4. Its function is as follows. Catalyzes the condensation of (S)-aspartate-beta-semialdehyde [(S)-ASA] and pyruvate to 4-hydroxy-tetrahydrodipicolinate (HTPA). The polypeptide is 4-hydroxy-tetrahydrodipicolinate synthase (Aliivibrio fischeri (strain ATCC 700601 / ES114) (Vibrio fischeri)).